The following is a 228-amino-acid chain: Probable methylthioribulose-1-phosphate dehydratase (228 aa).

Residue Cys-87 participates in substrate binding. His-105 and His-107 together coordinate Zn(2+). Glu-129 functions as the Proton donor/acceptor in the catalytic mechanism. His-185 contributes to the Zn(2+) binding site.

This sequence belongs to the aldolase class II family. MtnB subfamily. Requires Zn(2+) as cofactor.

Its subcellular location is the cytoplasm. It catalyses the reaction 5-(methylsulfanyl)-D-ribulose 1-phosphate = 5-methylsulfanyl-2,3-dioxopentyl phosphate + H2O. It functions in the pathway amino-acid biosynthesis; L-methionine biosynthesis via salvage pathway; L-methionine from S-methyl-5-thio-alpha-D-ribose 1-phosphate: step 2/6. In terms of biological role, catalyzes the dehydration of methylthioribulose-1-phosphate (MTRu-1-P) into 2,3-diketo-5-methylthiopentyl-1-phosphate (DK-MTP-1-P). The chain is Probable methylthioribulose-1-phosphate dehydratase from Drosophila willistoni (Fruit fly).